Reading from the N-terminus, the 168-residue chain is Peptide deformylase 2 (168 aa).

Cys-91 and His-133 together coordinate Fe cation. Residue Glu-134 is part of the active site. His-137 provides a ligand contact to Fe cation.

Belongs to the polypeptide deformylase family. Requires Fe(2+) as cofactor.

The enzyme catalyses N-terminal N-formyl-L-methionyl-[peptide] + H2O = N-terminal L-methionyl-[peptide] + formate. Its function is as follows. Removes the formyl group from the N-terminal Met of newly synthesized proteins. Requires at least a dipeptide for an efficient rate of reaction. N-terminal L-methionine is a prerequisite for activity but the enzyme has broad specificity at other positions. The sequence is that of Peptide deformylase 2 from Vibrio vulnificus (strain CMCP6).